The following is a 308-amino-acid chain: Glutamyl-Q tRNA(Asp) synthetase (308 aa).

L-glutamate contacts are provided by residues 19–23 and E55; that span reads RFAPS. A 'HIGH' region motif is present at residues 22–32; the sequence is PSPSGELHFGS. Zn(2+) contacts are provided by C111, C113, Y125, and C129. The L-glutamate site is built by Y182 and R200. A 'KMSKS' region motif is present at residues 238 to 242; the sequence is KLSKQ. An ATP-binding site is contributed by K241.

This sequence belongs to the class-I aminoacyl-tRNA synthetase family. GluQ subfamily. Zn(2+) serves as cofactor.

In terms of biological role, catalyzes the tRNA-independent activation of glutamate in presence of ATP and the subsequent transfer of glutamate onto a tRNA(Asp). Glutamate is transferred on the 2-amino-5-(4,5-dihydroxy-2-cyclopenten-1-yl) moiety of the queuosine in the wobble position of the QUC anticodon. In Escherichia coli O6:H1 (strain CFT073 / ATCC 700928 / UPEC), this protein is Glutamyl-Q tRNA(Asp) synthetase.